We begin with the raw amino-acid sequence, 309 residues long: Olfactory receptor 10V1 (309 aa).

Residues 1–25 are Extracellular-facing; sequence MEGINKTAKMQFFFRPFSPDPEVQM. Asn-5 carries N-linked (GlcNAc...) asparagine glycosylation. Residues 26-46 traverse the membrane as a helical segment; the sequence is LIFVVFLMMYLTSLGGNATIA. Residues 47–54 lie on the Cytoplasmic side of the membrane; it reads VIVQINHS. Residues 55-75 traverse the membrane as a helical segment; that stretch reads LHTPMYFFLANLAVLEIFYTS. At 76–100 the chain is on the extracellular side; the sequence is SITPLALANLLSMGKTPVSITGCGT. Cys-98 and Cys-190 are joined by a disulfide. Residues 101–121 form a helical membrane-spanning segment; sequence QMFFFVFLGGADCVLLVVMAY. The Cytoplasmic portion of the chain corresponds to 122 to 140; that stretch reads DQFIAICHPLRYRLIMSWS. The helical transmembrane segment at 141–161 threads the bilayer; the sequence is LCVELLVGSLVLGFLLSLPLT. At 162 to 198 the chain is on the extracellular side; that stretch reads ILIFHLPFCHNDEIYHFYCDMPAVMRLACADTRVHKT. A helical transmembrane segment spans residues 199–218; it reads ALYIISFIVLSIPLSLISIS. The Cytoplasmic segment spans residues 219–238; it reads YVFIVVAILRIRSAEGRQQA. A helical membrane pass occupies residues 239 to 259; it reads YSTCSSHILVVLLQYGCTSFI. Residues 260-272 are Extracellular-facing; that stretch reads YLSPSSSYSPEMG. Residues 273–293 traverse the membrane as a helical segment; sequence RVVSVAYTFITPILNPLIYSL. Over 294–309 the chain is Cytoplasmic; the sequence is RNKELKDALRKALRKF.

It belongs to the G-protein coupled receptor 1 family.

Its subcellular location is the cell membrane. Its function is as follows. Odorant receptor. The sequence is that of Olfactory receptor 10V1 (OR10V1) from Homo sapiens (Human).